The following is a 569-amino-acid chain: Pyrophosphate--fructose 6-phosphate 1-phosphotransferase subunit beta (569 aa).

Gly107 is a binding site for diphosphate. A Mg(2+)-binding site is contributed by Asp201. Substrate is bound by residues 229-231 (TID), 268-269 (KY), 276-278 (MGR), Glu337, and 442-445 (YEGR). Asp231 (proton acceptor) is an active-site residue.

This sequence belongs to the phosphofructokinase type A (PFKA) family. PPi-dependent PFK group II subfamily. Clade 'Long' sub-subfamily. As to quaternary structure, tetramer of two alpha (regulatory) and two beta (catalytic) chains. It depends on Mg(2+) as a cofactor.

The protein resides in the cytoplasm. The enzyme catalyses beta-D-fructose 6-phosphate + diphosphate = beta-D-fructose 1,6-bisphosphate + phosphate + H(+). It functions in the pathway carbohydrate degradation; glycolysis; D-glyceraldehyde 3-phosphate and glycerone phosphate from D-glucose: step 3/4. Its activity is regulated as follows. Allosterically activated by fructose 2,6-bisphosphate. Functionally, catalytic subunit of pyrophosphate--fructose 6-phosphate 1-phosphotransferase. Catalyzes the phosphorylation of D-fructose 6-phosphate, the first committing step of glycolysis. Uses inorganic phosphate (PPi) as phosphoryl donor instead of ATP like common ATP-dependent phosphofructokinases (ATP-PFKs), which renders the reaction reversible, and can thus function both in glycolysis and gluconeogenesis. The chain is Pyrophosphate--fructose 6-phosphate 1-phosphotransferase subunit beta from Solanum tuberosum (Potato).